A 359-amino-acid chain; its full sequence is Peptide chain release factor 1 (359 aa).

Residue Gln-235 is modified to N5-methylglutamine.

This sequence belongs to the prokaryotic/mitochondrial release factor family. Methylated by PrmC. Methylation increases the termination efficiency of RF1.

It localises to the cytoplasm. Its function is as follows. Peptide chain release factor 1 directs the termination of translation in response to the peptide chain termination codons UAG and UAA. The polypeptide is Peptide chain release factor 1 (Verminephrobacter eiseniae (strain EF01-2)).